A 91-amino-acid chain; its full sequence is MANKQDLIAKVAEATELTKKDSAAAVDTVFSSIEGFLSKGEKVQLIGFGNFEVRERAARKGRNPQTGAEIKIAASKVPAFKAGKALKDAVK.

The protein belongs to the bacterial histone-like protein family.

Histone-like DNA-binding protein which is capable of wrapping DNA to stabilize it, and thus to prevent its denaturation under extreme environmental conditions. Also seems to act as a fortuitous virulence factor in delayed sequelae by binding to heparan sulfate-proteoglycans in the extracellular matrix of target organs and acting as a nidus for in situ immune complex formation. This chain is DNA-binding protein HU (hup), found in Streptococcus downei (Streptococcus sobrinus).